We begin with the raw amino-acid sequence, 591 residues long: Trihelix transcription factor PTL (591 aa).

Residues M1–S32 are disordered. In terms of domain architecture, Myb-like 1 spans G118 to Y177. Residues C380–T410 form a disordered region. The span at N388–T410 shows a compositional bias: polar residues. In terms of domain architecture, Myb-like 2 spans W422–E479. A disordered region spans residues Q491–T551. The span at I515–Q534 shows a compositional bias: polar residues. Residues G535–T551 are compositionally biased toward low complexity.

As to quaternary structure, interacts with KIN10. As to expression, confined to flowers, at low levels. Also present in 7-days-old seedlings. Barely detectable in other tissues such as young seedlings, roots, stems, leaves and siliques. Expressed in flower primordia, more precisely between newly arisen sepal primordia and also at the basal margins of developing sepals.

The protein localises to the nucleus. In terms of biological role, transcription factor that prevents growth. Regulates perianth architecture in flower, mostly in the second whorl, probably by suppressing growth between initiating sepals, ensuring that they remain separate, and by modulating organ shapes. Required for the establishment of auxin flux. The polypeptide is Trihelix transcription factor PTL (PTL) (Arabidopsis thaliana (Mouse-ear cress)).